The chain runs to 207 residues: p-benzoquinone reductase (207 aa).

A Flavodoxin-like domain is found at 5-196; the sequence is IQIVFYSSYG…QIARFQGKHV (192 aa). FMN contacts are provided by residues 11–16, 84–86, 119–125, and His140; these read SSYGHI, TRF, and STASQHG. Tyr13 lines the NADP(+) pocket.

This sequence belongs to the WrbA family. As to quaternary structure, homodimer. It depends on FMN as a cofactor.

The enzyme catalyses 1,4-benzoquinone + NADPH + H(+) = hydroquinone + NADP(+). The protein operates within xenobiotic degradation; 4-nitrophenol degradation. Functionally, involved in the degradation of para-nitrophenol (PNP). Catalyzes the reduction of p-benzoquinone to hydroquinone. This is p-benzoquinone reductase (pnpB) from Pseudomonas sp. (strain WBC-3).